The chain runs to 409 residues: Autophagy-related protein 21 (409 aa).

4 WD repeats span residues 1–35, 221–261, 273–312, and 361–402; these read MKVL…KCFE, VHKG…TLQS, TRPC…QQNK, and KVDD…GECI. Positions 269-273 match the L/FRRG motif motif; it reads FRRGT.

This sequence belongs to the WD repeat PROPPIN family.

It is found in the cytoplasm. It localises to the membrane. Its subcellular location is the vacuole membrane. Its function is as follows. Required for cytoplasm to vacuole transport (Cvt) vesicles formation and mitophagy. Involved in binding of phosphatidylethanolamine to ATG8 and in recruitment of ATG8 and ATG5 to the pre-autophagosomal structure. Protects ATG8 from ARG4-mediated cleavage. This chain is Autophagy-related protein 21 (ATG21), found in Eremothecium gossypii (strain ATCC 10895 / CBS 109.51 / FGSC 9923 / NRRL Y-1056) (Yeast).